A 587-amino-acid chain; its full sequence is Probable terpene synthase 12 (587 aa).

The Mg(2+) site is built by Asp338, Asp342, and Glu489. A DDXXD motif motif is present at residues 338–342; the sequence is DDVYD.

The protein belongs to the terpene synthase family. Mg(2+) serves as cofactor.

Probable sesquiterpene synthase. The chain is Probable terpene synthase 12 (TPS12) from Ricinus communis (Castor bean).